Consider the following 468-residue polypeptide: Efflux pump azaK (468 aa).

Residues M1–A30 form a disordered region. The next 6 helical transmembrane spans lie at Q43 to V65, V80 to I100, K112 to S132, L135 to V155, Y174 to C194, and L207 to V227. The N-linked (GlcNAc...) asparagine glycan is linked to N228. Transmembrane regions (helical) follow at residues V257–V277, F296–V316, I329–V349, V357–L377, V387–F407, and P429–L449.

This sequence belongs to the major facilitator superfamily.

The protein localises to the cell membrane. Efflux pump that might be required for efficient secretion of azaphilones. The protein is Efflux pump azaK of Aspergillus niger (strain ATCC 1015 / CBS 113.46 / FGSC A1144 / LSHB Ac4 / NCTC 3858a / NRRL 328 / USDA 3528.7).